The chain runs to 286 residues: Bifunctional protein FolD (286 aa).

Residues 166-168 (GAS) and Ile232 contribute to the NADP(+) site.

This sequence belongs to the tetrahydrofolate dehydrogenase/cyclohydrolase family. As to quaternary structure, homodimer.

It catalyses the reaction (6R)-5,10-methylene-5,6,7,8-tetrahydrofolate + NADP(+) = (6R)-5,10-methenyltetrahydrofolate + NADPH. The enzyme catalyses (6R)-5,10-methenyltetrahydrofolate + H2O = (6R)-10-formyltetrahydrofolate + H(+). Its pathway is one-carbon metabolism; tetrahydrofolate interconversion. Its function is as follows. Catalyzes the oxidation of 5,10-methylenetetrahydrofolate to 5,10-methenyltetrahydrofolate and then the hydrolysis of 5,10-methenyltetrahydrofolate to 10-formyltetrahydrofolate. This is Bifunctional protein FolD from Shewanella piezotolerans (strain WP3 / JCM 13877).